Consider the following 166-residue polypeptide: Protein SprT (166 aa).

The SprT-like domain maps to 21 to 160 (ANQHFSREFP…CQQCQQTLAF (140 aa)). Histidine 74 contacts Zn(2+). Glutamate 75 is a catalytic residue. A Zn(2+)-binding site is contributed by histidine 78.

Belongs to the SprT family. Zn(2+) is required as a cofactor.

It localises to the cytoplasm. This is Protein SprT from Vibrio atlanticus (strain LGP32) (Vibrio splendidus (strain Mel32)).